The chain runs to 817 residues: Dynamin-related protein 5A (817 aa).

Polar residues predominate over residues 1–20; it reads MANSNTYLTTPTKTPSSRRN. Positions 1 to 37 are disordered; that stretch reads MANSNTYLTTPTKTPSSRRNQQSQSKMQSHSKDPINA. The region spanning 59-346 is the Dynamin-type G domain; the sequence is KLPIPEIVAI…LQKRYKEAAP (288 aa). The G1 motif stretch occupies residues 69–76; that stretch reads GGQSDGKS. 69–76 provides a ligand contact to GTP; it reads GGQSDGKS. Positions 95–97 are G2 motif; that stretch reads GTR. A G3 motif region spans residues 175–178; that stretch reads DTPG. GTP-binding positions include 175–179 and 244–247; these read DTPGF and SKFD. The G4 motif stretch occupies residues 244–247; sequence SKFD. Positions 280 to 283 are G5 motif; that stretch reads LPKD. Disordered stretches follow at residues 405 to 425 and 616 to 658; these read APEQWGKTTEEERGESGIGSW and LSDT…ETPS. Residues 618–629 are compositionally biased toward basic and acidic residues; that stretch reads DTSRDEPMKDQE.

The protein belongs to the TRAFAC class dynamin-like GTPase superfamily. Dynamin/Fzo/YdjA family. In terms of tissue distribution, expressed in root and leaf meristems.

Its subcellular location is the cytoplasm. The protein localises to the cytoskeleton. It is found in the phragmoplast. Functionally, probable microtubule-associated force-producing protein that is targeted to the forming cell plate during cytokinesis. May play a role in cell division. The chain is Dynamin-related protein 5A (DRP5A) from Arabidopsis thaliana (Mouse-ear cress).